The following is a 640-amino-acid chain: MTETRPNRLLDAIDTPSDLKGRSRADLKQIAAEVREEVVDVVSVTGGHLGSGLGVVELTVAIHSVFDTPDDKLVWDVGHQCYPHKILTGRKDRMRTLRQGGGLSGFTKRSESEYDPFGAAHASTSISAGLGFAKSRDLQNKDNHVICVIGDGSMSAGMAYEAMNNAGADRSRMIVILNDNDMSIAPPVGAMSHYFSRLVSSRPYRGLRRIAKKVVQPMGLESPARRAEEYLRGFAMGGTLFEEMGFYYIGPVDGHDLDTLLDLLENIKAMQDGPILLHVVTQKGKGYAPAENSADKYHGVSKFSVVTGEQAKGAGGPPSYQKVFGQTLAKLGETDDKICAITAAMPSGTSTDIFGKKFPDRHFDVGIAEQHAVTFAAGLAADGMKPFCAIYSTFLQRGYDQVVHDVAIQQLPVRFAIDRAGLVGADGATHAGSFDIGYLGALPGFVCMAPSDEAELARMVLTSLEIDDRPSAVRYPRGEGVGVVIPDLLKPLEIGKGRVVREGTSIAILSYGTRLQEALKAAEMLAAQGLSATVADARFAKPLDNELIERLAREHEVLVTIEEGSRGGFGSFVLEHLANCGGLDAGLKVRVMTLPDVFQDHDTPAAMYDQAGLTARHIAARAIEALGRGDLSAIERLASA.

Residues His-79 and 120-122 (AHA) each bind thiamine diphosphate. Asp-151 provides a ligand contact to Mg(2+). Thiamine diphosphate-binding positions include 152 to 153 (GS), Asn-180, Tyr-287, and Glu-369. Position 180 (Asn-180) interacts with Mg(2+).

The protein belongs to the transketolase family. DXPS subfamily. Homodimer. The cofactor is Mg(2+). Requires thiamine diphosphate as cofactor.

It catalyses the reaction D-glyceraldehyde 3-phosphate + pyruvate + H(+) = 1-deoxy-D-xylulose 5-phosphate + CO2. It functions in the pathway metabolic intermediate biosynthesis; 1-deoxy-D-xylulose 5-phosphate biosynthesis; 1-deoxy-D-xylulose 5-phosphate from D-glyceraldehyde 3-phosphate and pyruvate: step 1/1. Functionally, catalyzes the acyloin condensation reaction between C atoms 2 and 3 of pyruvate and glyceraldehyde 3-phosphate to yield 1-deoxy-D-xylulose-5-phosphate (DXP). This is 1-deoxy-D-xylulose-5-phosphate synthase from Hyphomonas neptunium (strain ATCC 15444).